A 274-amino-acid chain; its full sequence is Rhamnulose-1-phosphate aldolase (274 aa).

Residue Glu117 is part of the active site. Positions 141, 143, and 212 each coordinate Zn(2+).

It belongs to the aldolase class II family. RhaD subfamily. Homotetramer. Zn(2+) serves as cofactor.

It localises to the cytoplasm. The enzyme catalyses L-rhamnulose 1-phosphate = (S)-lactaldehyde + dihydroxyacetone phosphate. The protein operates within carbohydrate degradation; L-rhamnose degradation; glycerone phosphate from L-rhamnose: step 3/3. Its function is as follows. Catalyzes the reversible cleavage of L-rhamnulose-1-phosphate to dihydroxyacetone phosphate (DHAP) and L-lactaldehyde. This is Rhamnulose-1-phosphate aldolase from Escherichia coli (strain SE11).